We begin with the raw amino-acid sequence, 397 residues long: Cytochrome b (397 aa).

Transmembrane regions (helical) follow at residues 48 to 68, 92 to 113, 128 to 148, and 193 to 213; these read FGSM…LLSA, WMLR…YAHI, WYFG…GYTL, and FYTL…LHLF. 2 residues coordinate heme b: His98 and His112. Positions 197 and 211 each coordinate heme b. His216 provides a ligand contact to a ubiquinone. 4 helical membrane passes run 241–261, 303–323, 335–355, and 362–382; these read IKDL…VCVD, AGGV…PTLH, LNQV…WIGA, and YIIL…WTPF.

Belongs to the cytochrome b family. The main subunits of complex b-c1 are: cytochrome b, cytochrome c1 and the Rieske protein. It depends on heme b as a cofactor.

The protein resides in the mitochondrion inner membrane. In terms of biological role, component of the ubiquinol-cytochrome c reductase complex (complex III or cytochrome b-c1 complex) that is part of the mitochondrial respiratory chain. The b-c1 complex mediates electron transfer from ubiquinol to cytochrome c. Contributes to the generation of a proton gradient across the mitochondrial membrane that is then used for ATP synthesis. In Mytilus edulis (Blue mussel), this protein is Cytochrome b (MT-CYB).